A 562-amino-acid chain; its full sequence is MDVRELALKHALRNAYLHGGKAQLKPVVTAVLAESPELRPKVKEIIPIIKEVVEEVNRMSLEEQERILKERFPEALEERKKETRKGLPPLPNAERGKVKTRFAPNPDFYMTLGNARPAIISYEYAKAYEGRFVLRFEDTDPRTKRPLPEAYEAIKEDLSWLGIGWDEEYYQSQRMEVYYGLLRELVRRGGAYVCTCPPEEWRKLRDEGKPCPHRDLPPEEQEELLDQVLEGKFGEGEAVVRVKTDLRHPDPSVRDWVAFRIIDTSKHPHPLTGDKYVLWPTYNFAAGVDDYLMGITHVLRAREHRQNTVKQEFLYKHLGWTMPTVIHFGRLKLEGFVLSKSKMREAGFKGDDPRAATIRGLRRRGFAPEAIREVMLSVGIKSSDASISFANLAAENKKVIDKKAYRVMAVEDPAPAKLLAPEPLEAELPWHPTEGLGSRKYSVEPGEVVYLERADLRRAKRRGGLRLMELANFKYKGFDEDEGVYLLEFESKELDKEKGYDIVQWVKDPKGAIVWRPGERKSFALVEPEALKLEGWVQLIRKGYAKVDGVEEDTLNLIYLHE.

The 'HIGH' region motif lies at 104-114 (PNPDFYMTLGN).

Belongs to the class-I aminoacyl-tRNA synthetase family. Glutamate--tRNA ligase type 2 subfamily.

It is found in the cytoplasm. The enzyme catalyses tRNA(Glu) + L-glutamate + ATP = L-glutamyl-tRNA(Glu) + AMP + diphosphate. Its function is as follows. Catalyzes the attachment of glutamate to tRNA(Glu) in a two-step reaction: glutamate is first activated by ATP to form Glu-AMP and then transferred to the acceptor end of tRNA(Glu). This is Glutamate--tRNA ligase from Ignicoccus hospitalis (strain KIN4/I / DSM 18386 / JCM 14125).